Reading from the N-terminus, the 331-residue chain is 3-dehydrosphinganine reductase TSC10B (331 aa).

Residues 1–7 are Lumenal-facing; that stretch reads MAAIFSL. The chain crosses the membrane as a helical span at residues 8–28; that stretch reads FLFFILFIVSLLIILSFIVRP. Residues 29–262 lie on the Cytoplasmic side of the membrane; it reads RSVTIPIKFR…ICFDGIKAGK (234 aa). NADPH contacts are provided by G44, S46, S47, G48, R69, K73, and D95. Positions 44–48 match the GXSXG motif; that stretch reads GGSSG. The active-site Proton donor is S172. Y186 serves as the catalytic Proton acceptor. Y186 and K190 together coordinate NADP(+). K190 acts as the Lowers pKa of active site Tyr in catalysis. A helical transmembrane segment spans residues 263-283; sequence FTVTCHFIGFLLSIASTGMSP. Over 284 to 286 the chain is Lumenal; it reads QGS. The chain crosses the membrane as a helical span at residues 287–307; the sequence is FWLALTEVMFGGLIRLASLVF. Residues 308–331 are Cytoplasmic-facing; that stretch reads QWQWYKTIEKWSQRNKKEVNSKLA.

Belongs to the short-chain dehydrogenases/reductases (SDR) family. As to expression, expressed in roots, leaves, stems and flowers.

It is found in the endoplasmic reticulum membrane. It carries out the reaction sphinganine + NADP(+) = 3-oxosphinganine + NADPH + H(+). Its pathway is lipid metabolism; sphingolipid metabolism. In terms of biological role, catalyzes the reduction of 3'-oxosphinganine (3-ketodihydrosphingosine/KDS) to sphinganine (dihydrosphingosine/DHS), the second step of de novo sphingolipid biosynthesis. In plants, sphingolipids seems to play a critical role in mineral ion homeostasis, most likely through their involvement in the ion transport functionalities of membrane systems in the root. Is stereospecific for D-erythro-DHS production and does not produce L-threo-DHS. This is 3-dehydrosphinganine reductase TSC10B (TSC10B) from Arabidopsis thaliana (Mouse-ear cress).